The chain runs to 166 residues: Protein-export protein SecB (166 aa).

Belongs to the SecB family. As to quaternary structure, homotetramer, a dimer of dimers. One homotetramer interacts with 1 SecA dimer.

It is found in the cytoplasm. One of the proteins required for the normal export of preproteins out of the cell cytoplasm. It is a molecular chaperone that binds to a subset of precursor proteins, maintaining them in a translocation-competent state. It also specifically binds to its receptor SecA. This chain is Protein-export protein SecB, found in Cereibacter sphaeroides (strain ATCC 17029 / ATH 2.4.9) (Rhodobacter sphaeroides).